The primary structure comprises 879 residues: Band 4.1-like protein 1 (879 aa).

Residues 1–88 (MTTETGPDSE…TPSKAQKSPQ (88 aa)) form a disordered region. The segment covering 17-35 (ETPQQPEAAAAVTTPVTPA) has biased composition (low complexity). A Phosphothreonine modification is found at Thr-30. A compositionally biased stretch (basic and acidic residues) spans 38–50 (SHPETNSNEKHLT). Ser-75 is modified (phosphoserine). Residues 76–87 (ERTTPSKAQKSP) are compositionally biased toward polar residues. The residue at position 79 (Thr-79) is a Phosphothreonine. In terms of domain architecture, FERM spans 97–378 (AICRVTLLDA…EHHTFFRLVS (282 aa)). At Tyr-343 the chain carries Phosphotyrosine. Phosphoserine occurs at positions 378, 430, 437, 461, and 466. The hydrophilic stretch occupies residues 381 to 482 (PPPKGFLVMG…VRTPTKIKEL (102 aa)). The segment at 428–501 (SRSLDGAEFS…HKQEFLDKPE (74 aa)) is disordered. Basic and acidic residues predominate over residues 444–501 (ENHDAGPEGDKREDDAESGGRRSEAEEGEVRTPTKIKELKPEQETTPRHKQEFLDKPE). Thr-475 is modified (phosphothreonine). The spectrin--actin-binding stretch occupies residues 483-541 (KPEQETTPRHKQEFLDKPEDVLLKHQASINELKRTLKEPNSKLIHRDRDWDRERRLPSS). At Ser-510 the chain carries Phosphoserine. The segment covering 514–538 (LKRTLKEPNSKLIHRDRDWDRERRL) has biased composition (basic and acidic residues). Residues 514-594 (LKRTLKEPNS…QDQERDAVFL (81 aa)) are disordered. A phosphoserine mark is found at Ser-540, Ser-541, Ser-544, and Ser-546. Thr-550 carries the phosphothreonine modification. Residues 550 to 577 (TPEKASERAGLREGSEEKVKPPRPRAPE) are compositionally biased toward basic and acidic residues. A phosphoserine mark is found at Ser-564, Ser-578, Ser-639, Ser-648, Ser-650, Ser-665, Ser-666, Ser-671, Ser-677, and Ser-684. Positions 657 to 696 (FAQDLKGPSSQEDESGGLEDSPDRGACSTPEMPQFESVKA) are disordered. Position 685 is a phosphothreonine (Thr-685). Phosphoserine occurs at positions 721, 782, and 868. The segment at 743–879 (PCITTETIST…EERDKKPQES (137 aa)) is C-terminal (CTD).

In terms of assembly, interacts with AGAP2. In terms of tissue distribution, highest expression in brain, also present in kidney, olfactory epithelium, retina, sensory ganglia, gastrointestinal tract (only enteric neurons) and lung.

The protein localises to the cytoplasm. Its subcellular location is the cytoskeleton. In terms of biological role, may function to confer stability and plasticity to neuronal membrane via multiple interactions, including the spectrin-actin-based cytoskeleton, integral membrane channels and membrane-associated guanylate kinases. In Mus musculus (Mouse), this protein is Band 4.1-like protein 1.